Consider the following 655-residue polypeptide: MIDLVFPDGSSRQYPDGATGRDVAAAISKSLEKKALLIKLDGQVLDLDRRLTPDLLTGERKFEILTREAPEALDTIRHDTAHVLAEAVQELFPGTQVTIGPNVEDGFYYDFARDEPFSLDDLEKIEKRMKEIVDRDEKITREVWDRNEAIAHFDGIGEQYKAQIIRDLPDTDTITVYRQGNWKDLCRGPHLPSTKHVGKAFKLTKLAGAYWRGDQNNAQLQRIYGTAWASEADLEAHLKRIEEAEKRDHRKLGKTMDLFHIQEEGKGMVFWHPKGWALYRVLEDYMRRRLDAAGYKEVKTPQILDRSLWEKSGHAEKFGHAMFMCESAEGEVLAVKPMNCPGHIQIFNVGQKSYRELPLRMAEFGACHRYEPSGAMHGIMRVRAFTQDDAHIFCREEQVTEESARFIELLRSVYNDLGMTLADTKFSTRPELRAGTDETWDKAEAALAAAAEAAGETLTLQPGEGAFYGPKLEFSLKDAIGRVWQCGTLQLDFVLPERLDAEYVSEDGSKKRPVMLHRAILGSFERFIGILLENFAGALPVWLAPTQVVVATITSDADDYAREVVEKLTKLGMRAELDLRNEKINYKIREHSLAKVPVIAVVGRKEAETGQLALRRLGGEGQSVLSLEEALRVLKSDATPPDVARALAVQEAVTA.

The region spanning Met-1–Thr-66 is the TGS domain. The catalytic stretch occupies residues Asp-248–Pro-540. The Zn(2+) site is built by Cys-340, His-391, and His-517.

Belongs to the class-II aminoacyl-tRNA synthetase family. As to quaternary structure, homodimer. The cofactor is Zn(2+).

The protein localises to the cytoplasm. The enzyme catalyses tRNA(Thr) + L-threonine + ATP = L-threonyl-tRNA(Thr) + AMP + diphosphate + H(+). Its function is as follows. Catalyzes the attachment of threonine to tRNA(Thr) in a two-step reaction: L-threonine is first activated by ATP to form Thr-AMP and then transferred to the acceptor end of tRNA(Thr). Also edits incorrectly charged L-seryl-tRNA(Thr). This Caulobacter vibrioides (strain ATCC 19089 / CIP 103742 / CB 15) (Caulobacter crescentus) protein is Threonine--tRNA ligase.